The primary structure comprises 388 residues: MRYLTAGESHGQALTAIIEGIPAGLTLSAELINKELKRRQGGYGRGARMRIESDRVHISSGVRHGKTTGAPITLTIQNKDHQKWLDIMAVEAVEEQIKLKRKITHPRPGHADLVGGIKYRFDDLRNALERSSARETAMRVAVGAVAKVVLTELGIETANHVLVFGGIEVAVPEAMPFTDIKKAAEASDLSIVNPKQEATIKAHIDQVKKEGDTLGGIIETIIHGLPAGLGSYVQWDRKLDAKIAQAVLSINAFKGVEFGMGFDMGYQKGSQVMDEIIWHETSGYSRRTNRLGGFEAGMTTGQPIVVKGVMKPIPTLYKPLMSVDTETHEPYKATVERSDPTALPAAGVVMENVVATVITKEILEQFPSDNMTDLKQAFFAYCDYVHHF.

Arg39 and Arg45 together coordinate NADP(+). FMN is bound by residues 130 to 132 (RSS), 251 to 252 (NA), Ala296, 311 to 315 (KPIPT), and Arg337.

Belongs to the chorismate synthase family. Homotetramer. Requires FMNH2 as cofactor.

It catalyses the reaction 5-O-(1-carboxyvinyl)-3-phosphoshikimate = chorismate + phosphate. It functions in the pathway metabolic intermediate biosynthesis; chorismate biosynthesis; chorismate from D-erythrose 4-phosphate and phosphoenolpyruvate: step 7/7. Catalyzes the anti-1,4-elimination of the C-3 phosphate and the C-6 proR hydrogen from 5-enolpyruvylshikimate-3-phosphate (EPSP) to yield chorismate, which is the branch point compound that serves as the starting substrate for the three terminal pathways of aromatic amino acid biosynthesis. This reaction introduces a second double bond into the aromatic ring system. In Streptococcus equi subsp. zooepidemicus (strain H70), this protein is Chorismate synthase.